Here is a 258-residue protein sequence, read N- to C-terminus: Synaptosomal-associated protein 29 (258 aa).

The interval 1–41 (MSAYPKSYNPFDDDGEDEGARPAPWRDARDLPDGPDAPADR) is disordered. The span at 18 to 32 (EGARPAPWRDARDLP) shows a compositional bias: basic and acidic residues. Residues 76 to 107 (ASSEELARQRGVLERTEKMVDKMDQDLKISQK) are a coiled coil. Phosphoserine is present on residues Ser77, Ser78, and Ser114. 2 positions are modified to phosphothreonine: Thr130 and Thr137. The segment at 150 to 191 (ISTSKEQEAKYQASHPNLRKLDDTDPVPRGAGSAMSTDAYPK) is disordered. Phosphoserine is present on residues Ser163, Ser182, Ser185, Ser204, and Ser210. The t-SNARE coiled-coil homology domain occupies 196–258 (RAYHQKIDSN…KSTERKVRQL (63 aa)).

This sequence belongs to the SNAP-25 family. In terms of assembly, forms a SNARE complex, composed of VAMP8, SNAP29 and STX17, involved in fusion of autophagosome with lysosome. Interacts with multiple syntaxins including STX6. Interacts with EIPR1. Interacts with STX17; this interaction is increased in the absence of TMEM39A. As to quaternary structure, (Microbial infection) Interacts with Hantaan hantavirus nucleoprotein; this interaction prevents the breakdown of the viral glycoprotein N by virus-triggered autophagy. (Microbial infection) The interaction with STX17 is decreased in presence of SARS coronavirus-2/SARS-CoV-2 ORF3A protein. Found in brain, heart, kidney, liver, lung, placenta, skeletal muscle, spleen and pancreas.

It localises to the cytoplasm. Its subcellular location is the golgi apparatus membrane. The protein localises to the cytoplasmic vesicle. The protein resides in the autophagosome membrane. It is found in the cell projection. It localises to the cilium membrane. SNAREs, soluble N-ethylmaleimide-sensitive factor-attachment protein receptors, are essential proteins for fusion of cellular membranes. SNAREs localized on opposing membranes assemble to form a trans-SNARE complex, an extended, parallel four alpha-helical bundle that drives membrane fusion. SNAP29 is a SNARE involved in autophagy through the direct control of autophagosome membrane fusion with the lysososome membrane. Also plays a role in ciliogenesis by regulating membrane fusions. The polypeptide is Synaptosomal-associated protein 29 (Homo sapiens (Human)).